The sequence spans 206 residues: Dihydrofolate reductase (206 aa).

The 199-residue stretch at 6 to 204 (SLTLIVALTT…FDYEFEMWTR (199 aa)) folds into the DHFR domain. NADP(+) contacts are provided by residues A12 and 18–24 (GIGRSNS). 32-37 (EISYFK) is a binding site for substrate. 59 to 61 (RKT) is a binding site for NADP(+). Substrate is bound at residue R75. Residues 81 to 83 (TRN) and 124 to 131 (GGAQLYKA) each bind NADP(+).

It belongs to the dihydrofolate reductase family.

It carries out the reaction (6S)-5,6,7,8-tetrahydrofolate + NADP(+) = 7,8-dihydrofolate + NADPH + H(+). Its pathway is cofactor biosynthesis; tetrahydrofolate biosynthesis; 5,6,7,8-tetrahydrofolate from 7,8-dihydrofolate: step 1/1. In terms of biological role, key enzyme in folate metabolism. Catalyzes an essential reaction for de novo glycine and purine synthesis, and for DNA precursor synthesis. In Pneumocystis carinii, this protein is Dihydrofolate reductase.